The primary structure comprises 821 residues: Lysosomal beta glucosidase (821 aa).

The signal sequence occupies residues 1-24; sequence MKTIKSLFLLSLLIVNLLISSTYG. A propeptide spanning residues 25–69 is cleaved from the precursor; the sequence is SSIRVSIVGGEEAEVIEKPRTFGNKRELKLEYSQIYPKKQLNQEN. N-linked (GlcNAc...) asparagine glycosylation is found at N113, N146, and N266. D363 is an active-site residue. Residues N535, N555, N703, and N721 are each glycosylated (N-linked (GlcNAc...) asparagine).

It belongs to the glycosyl hydrolase 3 family. In terms of processing, glycosylated. The polyoligosaccharides are of the high-mannose type and are highly substituted with both phosphate and sulfate moieties.

It is found in the lysosome. The enzyme catalyses Hydrolysis of terminal, non-reducing beta-D-glucosyl residues with release of beta-D-glucose.. This chain is Lysosomal beta glucosidase (gluA), found in Dictyostelium discoideum (Social amoeba).